A 155-amino-acid chain; its full sequence is MKAIFSLYNIVSAILLLVLLAEFSTAELNHDKNRRGANMGLYAFPRVGRSDPSLANSLRDASDAAVFDGLYGDASQEDYNEADYQKRAGLVAFPRVGRSDAELRKFAHLLALQQVLDKRTGPSASSGLWFGPRLGKRSVDAKAFSDASKGQQEFN.

The signal sequence occupies residues 1 to 26 (MKAIFSLYNIVSAILLLVLLAEFSTA). Residues 27–33 (ELNHDKN) constitute a propeptide that is removed on maturation. Val47 is modified (valine amide). The propeptide occupies 50-85 (SDPSLANSLRDASDAAVFDGLYGDASQEDYNEADYQ). Valine amide is present on Val96. Residues 99–117 (SDAELRKFAHLLALQQVLD) constitute a propeptide that is removed on maturation. At Leu134 the chain carries Leucine amide. A propeptide spanning residues 138 to 155 (SVDAKAFSDASKGQQEFN) is cleaved from the precursor.

It belongs to the pyrokinin family.

It is found in the secreted. Functionally, CAP-1 and CAP-2, but not CAP-3 are ligands for the Capa receptor. CAP-1 and CAP-2 are probably components of the signal transduction pathway that leads to Malpighian tubule fluid secretion via the second messenger nitric oxide. The sequence is that of Cardio acceleratory peptide 2b from Drosophila pseudoobscura pseudoobscura (Fruit fly).